Consider the following 228-residue polypeptide: Uracil-DNA glycosylase (228 aa).

Asp64 (proton acceptor) is an active-site residue.

Belongs to the uracil-DNA glycosylase (UDG) superfamily. UNG family. As to quaternary structure, monomer.

The protein localises to the cytoplasm. The catalysed reaction is Hydrolyzes single-stranded DNA or mismatched double-stranded DNA and polynucleotides, releasing free uracil.. Its function is as follows. Excises uracil residues from the DNA which can arise as a result of misincorporation of dUMP residues by DNA polymerase or due to deamination of cytosine. This chain is Uracil-DNA glycosylase, found in Escherichia coli O6:H1 (strain CFT073 / ATCC 700928 / UPEC).